Reading from the N-terminus, the 295-residue chain is ATP synthase gamma chain (295 aa).

Belongs to the ATPase gamma chain family. F-type ATPases have 2 components, CF(1) - the catalytic core - and CF(0) - the membrane proton channel. CF(1) has five subunits: alpha(3), beta(3), gamma(1), delta(1), epsilon(1). CF(0) has three main subunits: a, b and c.

The protein resides in the cell inner membrane. Functionally, produces ATP from ADP in the presence of a proton gradient across the membrane. The gamma chain is believed to be important in regulating ATPase activity and the flow of protons through the CF(0) complex. The polypeptide is ATP synthase gamma chain (Paraburkholderia phymatum (strain DSM 17167 / CIP 108236 / LMG 21445 / STM815) (Burkholderia phymatum)).